Consider the following 67-residue polypeptide: Preprofallaxidin-1 (67 aa).

The signal sequence occupies residues 1 to 22 (MASLKKSLFLVLFLGMVSLSIC). Positions 23–46 (DKEKREGENEEEEEEHEEESEEKR) are excised as a propeptide. The tract at residues 24-46 (KEKREGENEEEEEEHEEESEEKR) is disordered. Acidic residues predominate over residues 30-42 (ENEEEEEEHEEES).

As to expression, expressed by the skin glands.

It is found in the secreted. Functionally, fallaxidin-4.1 shows antibacterial activity against the Gram-positive bacteria L.lactis (MIC=12 uM), M.luteus (MIC=100 uM), S.epidermidis (MIC=100 uM) and S.uberis (MIC=50 uM). No antibacterial activity against the Gram-positive bacteria B.cereus, E.faecalis, L.innocua, S.aureus, or the Gram-negative bacteria E.cloacae and E.coli. Inhibits the formation of NO by neuronal nitric oxide synthase with an IC(50) of 13.3 uM. This chain is Preprofallaxidin-1, found in Litoria fallax (Eastern dwarf tree frog).